We begin with the raw amino-acid sequence, 121 residues long: Nitrogen fixation nifHD region glnB-like protein 2 (121 aa).

The protein belongs to the P(II) protein family.

Could be involved in the regulation of nitrogen fixation. This Methanococcus maripaludis (Methanococcus deltae) protein is Nitrogen fixation nifHD region glnB-like protein 2 (glnBII).